A 175-amino-acid chain; its full sequence is Alpha-crystallin B chain (175 aa).

Met-1 carries the post-translational modification N-acetylmethionine. Ser-19, Ser-45, and Ser-59 each carry phosphoserine. The sHSP domain maps to 56-164 (RAPSWIDTGL…PERTIPITRE (109 aa)). His-83 is a Zn(2+) binding site. Lys-92 carries the N6-acetyllysine modification. Residues His-104, Glu-106, His-111, and His-119 each coordinate Zn(2+). The tract at residues 142 to 175 (VLTVNGPRKQASGPERTIPITREEKPAVTAAPKK) is disordered. Residue Lys-166 is modified to N6-acetyllysine. An O-linked (GlcNAc) threonine glycan is attached at Thr-170.

It belongs to the small heat shock protein (HSP20) family. In terms of assembly, heteromer composed of three CRYAA and one CRYAB subunits. Aggregates with homologous proteins, including the small heat shock protein HSPB1, to form large heteromeric complexes. Inter-subunit bridging via zinc ions enhances stability, which is crucial as there is no protein turn over in the lens. Interacts with HSPBAP1. Interacts with TTN/titin. Interacts with TMEM109; in the cellular response to DNA damage. Interacts with DES; binds rapidly during early stages of DES filament assembly and a reduced binding seen in the later stages. Interacts with TMED10; the interaction mediates the translocation from the cytoplasm into the ERGIC (endoplasmic reticulum-Golgi intermediate compartment) and thereby secretion. Interacts with ATP6V1A and with MTOR, forming a ternary complex. In terms of tissue distribution, lens as well as other tissues.

The protein localises to the cytoplasm. It is found in the nucleus. The protein resides in the secreted. It localises to the lysosome. In terms of biological role, may contribute to the transparency and refractive index of the lens. Has chaperone-like activity, preventing aggregation of various proteins under a wide range of stress conditions. In lens epithelial cells, stabilizes the ATP6V1A protein, preventing its degradation by the proteasome. The protein is Alpha-crystallin B chain of Rattus norvegicus (Rat).